A 187-amino-acid polypeptide reads, in one-letter code: Large ribosomal subunit protein uL22 (187 aa).

The interval 161-187 is disordered; sequence APTDDAPAKKKLSKKKLARQKEKMMRE. Over residues 169-178 the composition is skewed to basic residues; it reads KKKLSKKKLA.

Belongs to the universal ribosomal protein uL22 family.

The polypeptide is Large ribosomal subunit protein uL22 (RpL17) (Bombyx mori (Silk moth)).